Reading from the N-terminus, the 611-residue chain is Threonine--tRNA ligase (611 aa).

Positions 1 to 145 (MRLLLIHSDH…TILPGEGAAA (145 aa)) are editing domain. The segment at 195 to 487 (VHVDLMRAKE…TAAQEVPSFP (293 aa)) is catalytic. 3 residues coordinate Zn(2+): cysteine 287, histidine 339, and histidine 460.

This sequence belongs to the class-II aminoacyl-tRNA synthetase family. As to quaternary structure, homodimer. Zn(2+) is required as a cofactor.

Its subcellular location is the cytoplasm. It catalyses the reaction tRNA(Thr) + L-threonine + ATP = L-threonyl-tRNA(Thr) + AMP + diphosphate + H(+). In terms of biological role, catalyzes the attachment of threonine to tRNA(Thr) in a two-step reaction: L-threonine is first activated by ATP to form Thr-AMP and then transferred to the acceptor end of tRNA(Thr). Also edits incorrectly charged L-seryl-tRNA(Thr). In Methanoculleus marisnigri (strain ATCC 35101 / DSM 1498 / JR1), this protein is Threonine--tRNA ligase.